The primary structure comprises 545 residues: MMGHRPVLVLSQNTKRESGRKVQSGNINAAKTIADIIRTCLGPKSMMKMLLDPMGGIVMTNDGNAILREIQVQHPAAKSMIEISRTQDEEVGDGTTSVIILAGEMLSVAEHFLEQQMHPTVVISAYRMALDDMVSTLKKISTPVDVNNRDMMLNIINSSITTKVISRWSSLACNIALDAVKTVQFEENGRKEIDIKKYARVEKIPGGIIEDSCVLRGVMINKDVTHPRMRRYIKNPRIVLLDSSLEYKKGESQTDIEITREEDFTRILQMEEEYIQQLCEDIIQLKPDVVITEKGISDLAQHYLMRANVTAIRRVRKTDNNRIARACGARIVSRPEELREDDVGTGAGLLEIKKIGDEYFTFITDCKDPKACTILLRGASKEILSEVERNLQDAMQVCRNVLLDPQLVPGGGASEMAVAHALTEKSKAMTGVEQWPYRAVAQALEVIPRTLIQNCGASTIRLLTSLRAKHTQENCETWGVNGETGTLVDMKELGIWEPLAVKLQTYKTAVETAVLLLRIDDIVSGHKKKGDDQNRQTGAPDAGQE.

An N-acetylmethionine modification is found at Met1. Residues 1–24 (MMGHRPVLVLSQNTKRESGRKVQS) are disordered. Ser11 is subject to Phosphoserine. Residue Lys15 forms a Glycyl lysine isopeptide (Lys-Gly) (interchain with G-Cter in SUMO2) linkage. An ADP-binding site is contributed by Gly42. Gly42 lines the ATP pocket. Asp93 contacts Mg(2+). Residues Gly94, Thr95, Thr96, Ser97, Thr162, and Lys163 each contribute to the ADP site. Gly94, Thr95, and Thr96 together coordinate ATP. Ser170 is subject to Phosphoserine. Position 222 is an N6-acetyllysine (Lys222). Phosphoserine occurs at positions 243 and 244. The residue at position 247 (Tyr247) is a Phosphotyrosine. Residues Lys248 and Lys249 each participate in a glycyl lysine isopeptide (Lys-Gly) (interchain with G-Cter in SUMO2) cross-link. Phosphoserine is present on Ser252. Cysteines 366 and 372 form a disulfide. A Glycyl lysine isopeptide (Lys-Gly) (interchain with G-Cter in SUMO2) cross-link involves residue Lys381. Gly411 lines the ADP pocket. Gly411 contacts ATP. A phosphothreonine mark is found at Thr430 and Thr459. ADP-binding residues include Gly482, Glu483, Glu497, and Lys502. An ATP-binding site is contributed by Gly482. Glu497 is a binding site for ATP. The interval 526-545 (HKKKGDDQNRQTGAPDAGQE) is disordered.

This sequence belongs to the TCP-1 chaperonin family. In terms of assembly, component of the chaperonin-containing T-complex (TRiC), a hexadecamer composed of two identical back-to-back stacked rings enclosing a protein folding chamber. Each ring is made up of eight different subunits: TCP1/CCT1, CCT2, CCT3, CCT4, CCT5, CCT6A/CCT6, CCT7, CCT8. Interacts with PACRG. Interacts with DNAAF4. Interacts with DLEC1.

The protein resides in the cytoplasm. It carries out the reaction ATP + H2O = ADP + phosphate + H(+). Its function is as follows. Component of the chaperonin-containing T-complex (TRiC), a molecular chaperone complex that assists the folding of actin, tubulin and other proteins upon ATP hydrolysis. The TRiC complex mediates the folding of WRAP53/TCAB1, thereby regulating telomere maintenance. As part of the TRiC complex may play a role in the assembly of BBSome, a complex involved in ciliogenesis regulating transports vesicles to the cilia. This chain is T-complex protein 1 subunit gamma (Cct3), found in Rattus norvegicus (Rat).